The primary structure comprises 166 residues: Peptide methionine sulfoxide reductase MsrA (166 aa).

Cys11 is a catalytic residue.

The protein belongs to the MsrA Met sulfoxide reductase family.

It carries out the reaction L-methionyl-[protein] + [thioredoxin]-disulfide + H2O = L-methionyl-(S)-S-oxide-[protein] + [thioredoxin]-dithiol. It catalyses the reaction [thioredoxin]-disulfide + L-methionine + H2O = L-methionine (S)-S-oxide + [thioredoxin]-dithiol. Has an important function as a repair enzyme for proteins that have been inactivated by oxidation. Catalyzes the reversible oxidation-reduction of methionine sulfoxide in proteins to methionine. The protein is Peptide methionine sulfoxide reductase MsrA of Mycoplasmopsis pulmonis (strain UAB CTIP) (Mycoplasma pulmonis).